A 397-amino-acid polypeptide reads, in one-letter code: 1-deoxy-D-xylulose 5-phosphate reductoisomerase (397 aa).

Positions 12, 13, 14, 15, 38, 39, 40, and 126 each coordinate NADPH. K127 lines the 1-deoxy-D-xylulose 5-phosphate pocket. E128 provides a ligand contact to NADPH. Residue D152 coordinates Mn(2+). 4 residues coordinate 1-deoxy-D-xylulose 5-phosphate: S153, E154, S188, and H211. Position 154 (E154) interacts with Mn(2+). NADPH is bound at residue G217. S224, N229, K230, and E233 together coordinate 1-deoxy-D-xylulose 5-phosphate. E233 is a Mn(2+) binding site.

The protein belongs to the DXR family. Mg(2+) is required as a cofactor. It depends on Mn(2+) as a cofactor.

The enzyme catalyses 2-C-methyl-D-erythritol 4-phosphate + NADP(+) = 1-deoxy-D-xylulose 5-phosphate + NADPH + H(+). It functions in the pathway isoprenoid biosynthesis; isopentenyl diphosphate biosynthesis via DXP pathway; isopentenyl diphosphate from 1-deoxy-D-xylulose 5-phosphate: step 1/6. In terms of biological role, catalyzes the NADPH-dependent rearrangement and reduction of 1-deoxy-D-xylulose-5-phosphate (DXP) to 2-C-methyl-D-erythritol 4-phosphate (MEP). This Haemophilus influenzae (strain PittGG) protein is 1-deoxy-D-xylulose 5-phosphate reductoisomerase.